A 452-amino-acid chain; its full sequence is DNA primase DnaG (452 aa).

The region spanning 172 to 248 (DTVIIVEGRA…DIDYIARAPP (77 aa)) is the Toprim domain. The Mg(2+) site is built by Glu178, Asp222, and Asp224. Residues 289–320 (KKQIEQAQVQPSAAPTSPQPQPESTQPTQPIQ) are disordered. The span at 294–320 (QAQVQPSAAPTSPQPQPESTQPTQPIQ) shows a compositional bias: low complexity.

This sequence belongs to the archaeal DnaG primase family. As to quaternary structure, forms a ternary complex with MCM helicase and DNA. Component of the archaeal exosome complex. Requires Mg(2+) as cofactor.

It carries out the reaction ssDNA + n NTP = ssDNA/pppN(pN)n-1 hybrid + (n-1) diphosphate.. Functionally, RNA polymerase that catalyzes the synthesis of short RNA molecules used as primers for DNA polymerase during DNA replication. Also part of the exosome, which is a complex involved in RNA degradation. Acts as a poly(A)-binding protein that enhances the interaction between heteromeric, adenine-rich transcripts and the exosome. In Caldivirga maquilingensis (strain ATCC 700844 / DSM 13496 / JCM 10307 / IC-167), this protein is DNA primase DnaG.